The sequence spans 705 residues: Probable iron-sulfur-binding oxidoreductase FadF (705 aa).

Helical transmembrane passes span 4–24 (FLIA…YLFV), 71–91 (IIHV…IDFI), 109–129 (AFTF…GWAF), 146–166 (AGLV…GNGM), 173–193 (HGLS…SGVG), and 199–219 (VIFY…LVYV). 2 consecutive 4Fe-4S ferredoxin-type domains span residues 268–298 (QSQL…MLSP) and 360–391 (GDVI…VDKI). Residues Cys277, Cys280, Cys283, Cys287, Cys371, Cys374, Cys377, and Cys381 each contribute to the [4Fe-4S] cluster site.

The cofactor is [4Fe-4S] cluster.

It localises to the cell membrane. In Bacillus subtilis (strain 168), this protein is Probable iron-sulfur-binding oxidoreductase FadF (fadF).